The chain runs to 457 residues: MKVNLPVHKGEVLDVTIMDLTYQGMGVAKVDNYPIFIENALPEEKITVKVTKTTKNFAFGDVEKINQVSPHRVNPKGRVYRQTGIAPLQHLEYSEQLKFKQHQVAELFAKVHMDDVEVLPTIGMANPTQYRNKAQVPVRQVQGQLTTGFYKKNSHQLMPIEDYYIQDPAIDKAIVVVRDILRKYHEAAYDEFHHSGTIRTIMVRRGYYSHEMMVVIVTRTKHLPMADVVTQEIQAALPEVVSVIQNVNSKKTNVILGPVNNVLAGKATIDDQLLGLTFAISAQSFYQVNPQQTEKLYQLAIDQAGLTGNETVIDAYSGIGTISLTMAQHAKQVYGVEIVPAAIDNARQNADKNGITNATFVLDSAEKAMAKWQADGVKPDVIVVDPPRKGLDADFIKSAGEMAPKRVVYISCNPSTLVRDVQRFAEYGYHISAPVQPVDQFPQTPHIESVTVLEREQ.

In terms of domain architecture, TRAM spans 6–64 (PVHKGEVLDVTIMDLTYQGMGVAKVDNYPIFIENALPEEKITVKVTKTTKNFAFGDVEK). S-adenosyl-L-methionine contacts are provided by Q287, Y316, E337, and D385. C412 serves as the catalytic Nucleophile.

The protein belongs to the class I-like SAM-binding methyltransferase superfamily. RNA M5U methyltransferase family.

This is an uncharacterized protein from Lactiplantibacillus plantarum (strain ATCC BAA-793 / NCIMB 8826 / WCFS1) (Lactobacillus plantarum).